A 169-amino-acid polypeptide reads, in one-letter code: Peptide methionine sulfoxide reductase MsrA (169 aa).

The active site involves cysteine 10.

It belongs to the MsrA Met sulfoxide reductase family.

The catalysed reaction is L-methionyl-[protein] + [thioredoxin]-disulfide + H2O = L-methionyl-(S)-S-oxide-[protein] + [thioredoxin]-dithiol. It carries out the reaction [thioredoxin]-disulfide + L-methionine + H2O = L-methionine (S)-S-oxide + [thioredoxin]-dithiol. In terms of biological role, has an important function as a repair enzyme for proteins that have been inactivated by oxidation. Catalyzes the reversible oxidation-reduction of methionine sulfoxide in proteins to methionine. This Streptococcus equi subsp. zooepidemicus (strain MGCS10565) protein is Peptide methionine sulfoxide reductase MsrA.